We begin with the raw amino-acid sequence, 522 residues long: MYTPIPANTPAPTAPTSSMTSNSSSASNANTTSSSGINPRNRASGTPSNERARPASGISSFLNTFGIRQNSQTASSSAAPDQRLFGTTPSNSHMSVAMESIDTAPQQQEPRLHHPIQMPLSAQFHVHRNYQLPISISLTAPTTTDHQQSSAHNFEGNNVGNVQESLNQRQPNGTNNTTTSIISMAPAATTRNIVGGADGSTIVNNSQEMYKNLRHLIYAANQPNGTEILHLDLPATSAEESNNMFNVDEVTLKQRKDKHGLFSIRLTPFIDSSSTTNQGLFFEPIIRKAGPGSQLVIGRYTERVRDAISKIPEQYHPVVFKSKVVSRTHGCFKVDSQGNWYIKDVKSSSGTFLNHQRLSPASSLSKDTPLRDGDILQLGMDFRGGTEEIYRCVRMRIELNRSWKLKANSFNKEALQRLQNLQKLTTGVEEEDCSICLCKIKPCQAIFISPCAHSWHFRCVRRLVMLSYPQFVCPNCRSSCDLEASFESSDEEDESDVESEGDQLVDQLSVLMETSKDVDSHP.

Disordered regions lie at residues 1–56 and 69–92; these read MYTP…RPAS and QNSQ…PSNS. The segment covering 14-35 has biased composition (low complexity); the sequence is APTSSMTSNSSSASNANTTSSS. The segment covering 36 to 49 has biased composition (polar residues); that stretch reads GINPRNRASGTPSN. S206 is subject to Phosphoserine. Glycyl lysine isopeptide (Lys-Gly) (interchain with G-Cter in ubiquitin) cross-links involve residues K211, K256, K258, K288, K310, K333, K343, K346, K366, K406, K412, and K423. The FHA domain maps to 295 to 358; the sequence is LVIGRYTERV…SGTFLNHQRL (64 aa). The RING-type; atypical zinc-finger motif lies at 433-477; that stretch reads CSICLCKIKPCQAIFISPCAHSWHFRCVRRLVMLSYPQFVCPNCR.

Belongs to the DMA1 family. Post-translationally, UBC4-dependent autoubiquitination occurs at Lys-211, Lys-258, Lys-288, Lys-310, Lys-333, Lys-343, Lys-346, Lys-366, Lys-406, Lys-412 and Lys-423. UBC13/MMS2-dependent autoubiquitination occurs at Lys-258, Lys-310, Lys-346 and Lys-366. Lys-211, Lys-256, Lys-288, Lys-310, Lys-343, Lys-258, Lys-366 and Lys-412 are also ubiquitinated in trans by DMA1 E3 ligase in association with UBC4.

It is found in the cytoplasm. It catalyses the reaction S-ubiquitinyl-[E2 ubiquitin-conjugating enzyme]-L-cysteine + [acceptor protein]-L-lysine = [E2 ubiquitin-conjugating enzyme]-L-cysteine + N(6)-ubiquitinyl-[acceptor protein]-L-lysine.. E3 ubiquitin-protein ligase which functions in cell cycle retarding in conjunction with the UBC4 and UBC13/MMS2 complex, 2 E2 ubiquitin conjugating enzymes. Involved in nutritional control of the cell cycle. Required for proper spindle positioning, likely regulating septin ring deposition at the bud neck. This is E3 ubiquitin-protein ligase DMA2 (DMA2) from Saccharomyces cerevisiae (strain YJM789) (Baker's yeast).